A 263-amino-acid polypeptide reads, in one-letter code: 4'-phosphopantetheinyl transferase pptA (263 aa).

This sequence belongs to the P-Pant transferase superfamily.

It catalyses the reaction apo-[ACP] + CoA = holo-[ACP] + adenosine 3',5'-bisphosphate + H(+). In terms of biological role, transfers the 4'-phosphopantetheine moiety from coenzyme A to a Ser of an acyl-carrier-protein. Activates the peptidyl carrier protein (PCP) domains of surfactin synthas. The polypeptide is 4'-phosphopantetheinyl transferase pptA (pptA) (Paxillus involutus (Naked brimcap)).